A 286-amino-acid polypeptide reads, in one-letter code: 33 kDa chaperonin (286 aa).

2 disulfide bridges follow: C225–C227 and C258–C261.

This sequence belongs to the HSP33 family. Post-translationally, under oxidizing conditions two disulfide bonds are formed involving the reactive cysteines. Under reducing conditions zinc is bound to the reactive cysteines and the protein is inactive.

Its subcellular location is the cytoplasm. In terms of biological role, redox regulated molecular chaperone. Protects both thermally unfolding and oxidatively damaged proteins from irreversible aggregation. Plays an important role in the bacterial defense system toward oxidative stress. The chain is 33 kDa chaperonin from Shewanella sp. (strain ANA-3).